We begin with the raw amino-acid sequence, 444 residues long: Protein kinase C and casein kinase substrate in neurons protein 1 (444 aa).

A phosphoserine mark is found at Ser2 and Ser79. Residues 13 to 283 enclose the F-BAR domain; sequence EETTDSFWEV…AIRGADAQDD (271 aa). Residues 26 to 275 are a coiled coil; the sequence is KRTVKRIDDG…QVYRELEQAI (250 aa). Thr184 is modified (phosphothreonine). Residues 313 to 384 are disordered; it reads AAKKEKQPKK…NGGSNPFDED (72 aa). A compositionally biased stretch (basic and acidic residues) spans 314 to 324; that stretch reads AKKEKQPKKAE. Residues 336–358 show a composition bias toward polar residues; the sequence is ESTSQAGDRGSVSSYDRGQTYAT. A phosphoserine mark is found at Ser346, Ser348, Ser349, Ser361, and Ser365. One can recognise an SH3 domain in the interval 385–444; the sequence is AKGVRVRALYDYDGQEQDELSFKAGDELTKLGEEDEQGWCRGRLDSGQLGLYPANYVEVV. The residue at position 394 (Tyr394) is a Phosphotyrosine. 2 positions are modified to phosphoserine: Ser405 and Ser430.

Belongs to the PACSIN family. Homodimer. May form heterooligomers with other PACSINs. Interacts with MAPT. Interacts (via SH3 domain) with SYNJ1 and WASL. Interacts (via SH3 domain) with DNM1; the interaction is reduced by DNM1 phosphorylation. Interacts with DNM2 and DNM3. Interacts with both COBL and DBNL. Identified in a complex composed of COBL, PACSIN1 and WASL. Interacts with EHD1 and EHD3. Interacts with TRPV4. Phosphorylated by casein kinase 2 (CK2) and protein kinase C (PKC).

It is found in the cytoplasm. Its subcellular location is the cell projection. The protein localises to the synapse. The protein resides in the synaptosome. It localises to the ruffle membrane. It is found in the membrane. Its subcellular location is the cytoplasmic vesicle membrane. The protein localises to the cytosol. The protein resides in the cell membrane. Functionally, binds to membranes via its F-BAR domain and mediates membrane tubulation. Plays a role in the reorganization of the microtubule cytoskeleton via its interaction with MAPT; this decreases microtubule stability and inhibits MAPT-induced microtubule polymerization. Plays a role in cellular transport processes by recruiting DNM1, DNM2 and DNM3 to membranes. Plays a role in the reorganization of the actin cytoskeleton and in neuron morphogenesis via its interaction with COBL and WASL, and by recruiting COBL to the cell cortex. Plays a role in the regulation of neurite formation, neurite branching and the regulation of neurite length. Required for normal synaptic vesicle endocytosis; this process retrieves previously released neurotransmitters to accommodate multiple cycles of neurotransmission. Required for normal excitatory and inhibitory synaptic transmission. The protein is Protein kinase C and casein kinase substrate in neurons protein 1 (PACSIN1) of Bos taurus (Bovine).